Consider the following 110-residue polypeptide: UPF0060 membrane protein Rpal_4363 (110 aa).

4 consecutive transmembrane segments (helical) span residues 4-24, 31-51, 59-79, and 88-108; these read LLTFCAAALMEITGCFAFWAW, PLWLIPGMLALALFAYLLTLA, AYAAYGGIYIASALLWGWAIE, and VIGAAICLVGMSVILFGPRAL.

This sequence belongs to the UPF0060 family.

It is found in the cell inner membrane. The sequence is that of UPF0060 membrane protein Rpal_4363 from Rhodopseudomonas palustris (strain TIE-1).